The chain runs to 90 residues: Small ribosomal subunit protein uS15c (90 aa).

Belongs to the universal ribosomal protein uS15 family. As to quaternary structure, part of the 30S ribosomal subunit.

It localises to the plastid. It is found in the chloroplast. This chain is Small ribosomal subunit protein uS15c (rps15-A), found in Ipomoea purpurea (Common morning glory).